A 62-amino-acid polypeptide reads, in one-letter code: MTIAFQLAVFALIATSSILLISVPVVFASPDGWSSNKNIVFSGTSLWLGLVFLVGILNSLIS.

2 helical membrane-spanning segments follow: residues 8 to 28 (AVFA…VVFA) and 41 to 61 (FSGT…NSLI).

Belongs to the PsbZ family. In terms of assembly, PSII is composed of 1 copy each of membrane proteins PsbA, PsbB, PsbC, PsbD, PsbE, PsbF, PsbH, PsbI, PsbJ, PsbK, PsbL, PsbM, PsbT, PsbY, PsbZ, Psb30/Ycf12, at least 3 peripheral proteins of the oxygen-evolving complex and a large number of cofactors. It forms dimeric complexes.

Its subcellular location is the plastid. The protein resides in the chloroplast thylakoid membrane. Functionally, may control the interaction of photosystem II (PSII) cores with the light-harvesting antenna, regulates electron flow through the 2 photosystem reaction centers. PSII is a light-driven water plastoquinone oxidoreductase, using light energy to abstract electrons from H(2)O, generating a proton gradient subsequently used for ATP formation. In Spinacia oleracea (Spinach), this protein is Photosystem II reaction center protein Z.